The following is a 703-amino-acid chain: 1,4-alpha-glucan-branching enzyme (703 aa).

2 residues coordinate (1,4-alpha-D-glucosyl)n: W93 and K130. D355 acts as the Nucleophile in catalysis. The active-site Proton donor is E415.

It belongs to the glycosyl hydrolase 13 family. GlgB subfamily.

The protein localises to the cytoplasm. It catalyses the reaction Transfers a segment of a (1-&gt;4)-alpha-D-glucan chain to a primary hydroxy group in a similar glucan chain.. Its pathway is glycan biosynthesis; glycogen biosynthesis. Glycogen-branching enzyme participates in the glycogen biosynthetic process along with glycogenin and glycogen synthase. Generates alpha-1,6-glucosidic branches from alpha-1,4-linked glucose chains, to increase solubility of the glycogen polymer. The sequence is that of 1,4-alpha-glucan-branching enzyme (GLC3) from Eremothecium gossypii (strain ATCC 10895 / CBS 109.51 / FGSC 9923 / NRRL Y-1056) (Yeast).